The chain runs to 107 residues: Glutaconyl-CoA decarboxylase subunit delta (107 aa).

The helical transmembrane segment at 10–32 threads the bilayer; that stretch reads MINMTIVFGVLIVLGILMVLIHA. The segment at 37 to 60 is disordered; sequence KKVQGKKKPVVAKPAPSAAASKRQ. A compositionally biased stretch (low complexity) spans 47-57; sequence VAKPAPSAAAS.

Belongs to the OadG family. As to quaternary structure, heterooctamer consisting of two alpha, two beta, two gamma and two delta subunits.

It localises to the cell membrane. It catalyses the reaction (2E)-glutaconyl-CoA + Na(+)(in) + H(+) = (2E)-butenoyl-CoA + Na(+)(out) + CO2. It functions in the pathway amino-acid degradation; L-glutamate degradation via hydroxyglutarate pathway; crotonoyl-CoA from L-glutamate: step 5/5. In terms of biological role, part of the primary sodium pump glutaconyl-CoA decarboxylase (GCD). Possible membrane anchor for the alpha subunit. The protein is Glutaconyl-CoA decarboxylase subunit delta (gcdD) of Acidaminococcus fermentans (strain ATCC 25085 / DSM 20731 / CCUG 9996 / CIP 106432 / VR4).